The primary structure comprises 336 residues: Dihydroorotate dehydrogenase (quinone) (336 aa).

Residues 62-66 and T86 each bind FMN; that span reads AGLDK. Position 66 (K66) interacts with substrate. 111–115 serves as a coordination point for substrate; the sequence is NRMGF. FMN contacts are provided by N139 and N172. N172 provides a ligand contact to substrate. S175 (nucleophile) is an active-site residue. N177 is a substrate binding site. Positions 217 and 245 each coordinate FMN. 246–247 is a substrate binding site; sequence NT. FMN-binding positions include G268, G297, and 318-319; that span reads YS.

The protein belongs to the dihydroorotate dehydrogenase family. Type 2 subfamily. In terms of assembly, monomer. The cofactor is FMN.

It localises to the cell membrane. It carries out the reaction (S)-dihydroorotate + a quinone = orotate + a quinol. It functions in the pathway pyrimidine metabolism; UMP biosynthesis via de novo pathway; orotate from (S)-dihydroorotate (quinone route): step 1/1. In terms of biological role, catalyzes the conversion of dihydroorotate to orotate with quinone as electron acceptor. The sequence is that of Dihydroorotate dehydrogenase (quinone) from Cronobacter sakazakii (strain ATCC BAA-894) (Enterobacter sakazakii).